A 372-amino-acid chain; its full sequence is Geranylgeranyl pyrophosphate synthase 4 (372 aa).

Positions 1-22 are cleaved as a signal peptide; sequence MEAQNIFLYLLIVFLSLHFVFT. 3 residues coordinate isopentenyl diphosphate: lysine 121, arginine 124, and histidine 153. Mg(2+)-binding residues include aspartate 160 and aspartate 166. Arginine 171 provides a ligand contact to dimethylallyl diphosphate. Position 172 (arginine 172) interacts with isopentenyl diphosphate. Dimethylallyl diphosphate-binding residues include lysine 257, threonine 258, glutamine 295, lysine 312, and lysine 322.

This sequence belongs to the FPP/GGPP synthase family. As to quaternary structure, monomer. The cofactor is Mg(2+). In terms of tissue distribution, faintly expressed in flowers. Expressed in roots and siliques.

Its subcellular location is the endoplasmic reticulum. The catalysed reaction is isopentenyl diphosphate + dimethylallyl diphosphate = (2E)-geranyl diphosphate + diphosphate. It carries out the reaction isopentenyl diphosphate + (2E)-geranyl diphosphate = (2E,6E)-farnesyl diphosphate + diphosphate. The enzyme catalyses isopentenyl diphosphate + (2E,6E)-farnesyl diphosphate = (2E,6E,10E)-geranylgeranyl diphosphate + diphosphate. It participates in isoprenoid biosynthesis; farnesyl diphosphate biosynthesis; farnesyl diphosphate from geranyl diphosphate and isopentenyl diphosphate: step 1/1. It functions in the pathway isoprenoid biosynthesis; geranyl diphosphate biosynthesis; geranyl diphosphate from dimethylallyl diphosphate and isopentenyl diphosphate: step 1/1. The protein operates within isoprenoid biosynthesis; geranylgeranyl diphosphate biosynthesis; geranylgeranyl diphosphate from farnesyl diphosphate and isopentenyl diphosphate: step 1/1. Its function is as follows. Catalyzes the trans-addition of the three molecules of isopentenyl diphosphate (IPP) onto dimethylallyl diphosphate (DMAPP) to form geranylgeranyl diphosphate. The chain is Geranylgeranyl pyrophosphate synthase 4 from Arabidopsis thaliana (Mouse-ear cress).